An 88-amino-acid polypeptide reads, in one-letter code: UPF0335 protein M446_5200 (88 aa).

Belongs to the UPF0335 family.

This Methylobacterium sp. (strain 4-46) protein is UPF0335 protein M446_5200.